A 56-amino-acid chain; its full sequence is Large ribosomal subunit protein bL33 (56 aa).

The protein belongs to the bacterial ribosomal protein bL33 family.

This chain is Large ribosomal subunit protein bL33, found in Orientia tsutsugamushi (strain Ikeda) (Rickettsia tsutsugamushi).